A 151-amino-acid polypeptide reads, in one-letter code: MKVILRKDVAALGDAGEVVAVKNGYANNYLIPQGMAIRATEGTLKALETERKQQVKKVEMLRKTARELAAKIEQMTLKVFAKAGESGKLFGTVTSGDIADALKAQGIEIDRRKITLEAPVKTLGKYEADAKVFSDVAVKISFEVEAEGSEA.

This sequence belongs to the bacterial ribosomal protein bL9 family.

In terms of biological role, binds to the 23S rRNA. The chain is Large ribosomal subunit protein bL9 from Chlorobium phaeobacteroides (strain DSM 266 / SMG 266 / 2430).